The primary structure comprises 56 residues: Hemolymph trypsin inhibitor A (56 aa).

Residues 22-56 (CFLPLEVGVCRALFFRYGYDPAIKACXEFMYGGCQ) enclose the BPTI/Kunitz inhibitor domain. Cysteine 31 and cysteine 55 are disulfide-bonded.

Inhibits trypsin. This Manduca sexta (Tobacco hawkmoth) protein is Hemolymph trypsin inhibitor A.